Consider the following 269-residue polypeptide: Tryptophan synthase alpha chain (269 aa).

Residues E49 and D60 each act as proton acceptor in the active site.

Belongs to the TrpA family. In terms of assembly, tetramer of two alpha and two beta chains.

It carries out the reaction (1S,2R)-1-C-(indol-3-yl)glycerol 3-phosphate + L-serine = D-glyceraldehyde 3-phosphate + L-tryptophan + H2O. It participates in amino-acid biosynthesis; L-tryptophan biosynthesis; L-tryptophan from chorismate: step 5/5. Functionally, the alpha subunit is responsible for the aldol cleavage of indoleglycerol phosphate to indole and glyceraldehyde 3-phosphate. This Stutzerimonas stutzeri (strain A1501) (Pseudomonas stutzeri) protein is Tryptophan synthase alpha chain.